Here is a 24-residue protein sequence, read N- to C-terminus: Brevinin-1JDc (24 aa).

An intrachain disulfide couples C18 to C24.

As to expression, expressed by the skin glands.

It localises to the secreted. Has antibacterial activity against E.coli ATCC 25992 (MIC=49 uM), E.coli CIB 84492 (MIC=25 uM), S.aureus ATCC 25923 (MIC=6 uM) and S.aureus CIB 85462 (MIC=3 uM). The polypeptide is Brevinin-1JDc (Odorrana jingdongensis (Jingdong frog)).